Here is a 453-residue protein sequence, read N- to C-terminus: Probable exopolygalacturonase B (453 aa).

An N-terminal signal peptide occupies residues methionine 1–serine 16. 2 N-linked (GlcNAc...) asparagine glycosylation sites follow: asparagine 185 and asparagine 225. Catalysis depends on aspartate 255, which acts as the Proton donor. Cysteine 257 and cysteine 274 form a disulfide bridge. N-linked (GlcNAc...) asparagine glycosylation is found at asparagine 263 and asparagine 275. Residue histidine 278 is part of the active site. PbH1 repeat units lie at residues isoleucine 295 to alanine 316 and isoleucine 327 to glutamine 348. Residues asparagine 302, asparagine 329, asparagine 354, and asparagine 366 are each glycosylated (N-linked (GlcNAc...) asparagine). The PbH1 3 repeat unit spans residues proline 362–asparagine 405. Cysteine 392 and cysteine 398 are disulfide-bonded. An N-linked (GlcNAc...) asparagine glycan is attached at asparagine 436.

This sequence belongs to the glycosyl hydrolase 28 family.

The protein resides in the secreted. It catalyses the reaction [(1-&gt;4)-alpha-D-galacturonosyl](n) + H2O = alpha-D-galacturonate + [(1-&gt;4)-alpha-D-galacturonosyl](n-1). Specific in hydrolyzing the terminal glycosidic bond of polygalacturonic acid and oligogalacturonates. The protein is Probable exopolygalacturonase B (pgxB) of Aspergillus fumigatus (strain ATCC MYA-4609 / CBS 101355 / FGSC A1100 / Af293) (Neosartorya fumigata).